Consider the following 610-residue polypeptide: Dopamine beta-hydroxylase (610 aa).

Residues 1-9 (MKVPSPSVR) are Cytoplasmic-facing. A helical; Signal-anchor for type II membrane protein transmembrane segment spans residues 10–30 (EAASMYGTAVAIFLVILVAAL). Residues 31–610 (QGSEPPESPF…TVVDIGGGKG (580 aa)) lie on the Intragranular side of the membrane. One can recognise a DOMON domain in the interval 50–166 (GTLELSWNVS…GTVHLVYGIL (117 aa)). Residues N57, N177, and N194 are each glycosylated (N-linked (GlcNAc...) asparagine). Cystine bridges form between C147–C589, C225–C276, C262–C288, C383–C496, C387–C558, and C459–C481. Y223 is a catalytic residue. Residues H255 and H256 each coordinate Cu(2+). Cu(2+)-binding residues include H326, H405, H407, and M480. H405 is a catalytic residue. Residues 586 to 610 (TPRCPASRGRSPAGPTVVDIGGGKG) form a disordered region.

Belongs to the copper type II ascorbate-dependent monooxygenase family. As to quaternary structure, homotetramer; composed of two disulfide-linked dimers. The cofactor is Cu(2+). In terms of processing, proteolytic cleavage after the membrane-anchor leads to the release of the soluble form. Post-translationally, N-glycosylated. In terms of tissue distribution, detected in adrenal medulla chromaffin cells.

It localises to the cytoplasmic vesicle. The protein resides in the secretory vesicle lumen. The protein localises to the secretory vesicle. Its subcellular location is the chromaffin granule lumen. It is found in the secreted. It localises to the secretory vesicle membrane. The protein resides in the chromaffin granule membrane. The catalysed reaction is dopamine + 2 L-ascorbate + O2 = (R)-noradrenaline + 2 monodehydro-L-ascorbate radical + H2O. Its pathway is catecholamine biosynthesis; (R)-noradrenaline biosynthesis; (R)-noradrenaline from dopamine: step 1/1. Its function is as follows. Catalyzes the hydroxylation of dopamine to noradrenaline (also known as norepinephrine), and is thus vital for regulation of these neurotransmitters. The chain is Dopamine beta-hydroxylase (DBH) from Equus caballus (Horse).